The primary structure comprises 331 residues: MKKPVVIGLAIAAIVAVIAGGTWWYQSRQDDGLTLYGNVDIRTVNISFRVGGRLASLNVDEGDAIKAGQVLGELDHAPYENALMQAKAGVSVAQAQYDLMLAGYRDEEIAQAAAAVRQAQAAYDYAQNFYNRQQGLWKSRTISANDLENARSSRDQAQATLKSAQDKLSQYRTGNREQDIAQAKASLEQAKAQLAQAQLDLQDTTLIAPANGTLLTRAVEPGSMLNAGSTVLTLSLTRPVWVRAYVDERNLSQTQPGRDILLYTDGRPDKPYHGKIGFVSPTAEFTPKTVETPDLRTDLVYRLRIIVTDADDALRQGMPVTVKFNDEARHE.

The signal sequence occupies residues M1–A19. Residues E107–A208 adopt a coiled-coil conformation.

It belongs to the UPF0194 family.

The protein resides in the periplasm. This chain is UPF0194 membrane protein YbhG, found in Salmonella heidelberg (strain SL476).